The chain runs to 100 residues: Small ubiquitin-related modifier 1 (100 aa).

A compositionally biased stretch (basic and acidic residues) spans 1-12 (MSAAGEEDKKPA). The interval 1–23 (MSAAGEEDKKPAGGEGGGAHINL) is disordered. In terms of domain architecture, Ubiquitin-like spans 19–96 (AHINLKVKGQ…IDAMLHQTGG (78 aa)). Gly-96 is covalently cross-linked (Glycyl lysine isopeptide (Gly-Lys) (interchain with K-? in acceptor proteins)).

The protein belongs to the ubiquitin family. SUMO subfamily. Interacts with SAE2, SCE1 and SIZ1. Covalently attached to a number of proteins.

The protein resides in the nucleus. The protein localises to the cytoplasm. Its function is as follows. Ubiquitin-like protein which can be covalently attached to target lysines as a monomer. Does not seem to be involved in protein degradation and may function as an antagonist of ubiquitin in the degradation process. The chain is Small ubiquitin-related modifier 1 (SUMO1) from Oryza sativa subsp. japonica (Rice).